A 40-amino-acid chain; its full sequence is Photosystem II reaction center protein J (40 aa).

The helical transmembrane segment at 8 to 28 (IPLWLVGTVTGTLVIGLMGIF) threads the bilayer.

This sequence belongs to the PsbJ family. In terms of assembly, PSII is composed of 1 copy each of membrane proteins PsbA, PsbB, PsbC, PsbD, PsbE, PsbF, PsbH, PsbI, PsbJ, PsbK, PsbL, PsbM, PsbT, PsbX, PsbY, PsbZ, Psb30/Ycf12, at least 3 peripheral proteins of the oxygen-evolving complex and a large number of cofactors. It forms dimeric complexes.

It is found in the plastid. The protein resides in the chloroplast thylakoid membrane. Functionally, one of the components of the core complex of photosystem II (PSII). PSII is a light-driven water:plastoquinone oxidoreductase that uses light energy to abstract electrons from H(2)O, generating O(2) and a proton gradient subsequently used for ATP formation. It consists of a core antenna complex that captures photons, and an electron transfer chain that converts photonic excitation into a charge separation. In Psilotum nudum (Whisk fern), this protein is Photosystem II reaction center protein J.